Consider the following 198-residue polypeptide: MELRLFVGLGNPGLQYTQTRHNAGFLAVDALAKRWQCSWVEKSRFKGYLAEGAGPGGRAILLKPTTYMNHSGQSVRAVADYFRLPPQQLLVLYDEVALPLGKIRLRPEGSAAGHNGIKSLIEHLGTNQFARLRIGIGREPPPPVLTNYVLGKFAPEEQEQLPAILDGCVEAVEAVLAKGLEKAMSIYNARSFGSPPDP.

Residue Tyr-16 coordinates tRNA. The active-site Proton acceptor is the His-21. Residues Tyr-67, Asn-69, and Asn-115 each coordinate tRNA.

The protein belongs to the PTH family. In terms of assembly, monomer.

The protein resides in the cytoplasm. The catalysed reaction is an N-acyl-L-alpha-aminoacyl-tRNA + H2O = an N-acyl-L-amino acid + a tRNA + H(+). In terms of biological role, hydrolyzes ribosome-free peptidyl-tRNAs (with 1 or more amino acids incorporated), which drop off the ribosome during protein synthesis, or as a result of ribosome stalling. Functionally, catalyzes the release of premature peptidyl moieties from peptidyl-tRNA molecules trapped in stalled 50S ribosomal subunits, and thus maintains levels of free tRNAs and 50S ribosomes. This Gloeobacter violaceus (strain ATCC 29082 / PCC 7421) protein is Peptidyl-tRNA hydrolase.